We begin with the raw amino-acid sequence, 139 residues long: Large-conductance mechanosensitive channel 1 (139 aa).

3 consecutive transmembrane segments (helical) span residues 8-28 (FISK…AAFG), 30-50 (IVDS…FGGL), and 81-101 (GSFI…FLMV).

Belongs to the MscL family. As to quaternary structure, homopentamer.

Its subcellular location is the cell inner membrane. Channel that opens in response to stretch forces in the membrane lipid bilayer. May participate in the regulation of osmotic pressure changes within the cell. The protein is Large-conductance mechanosensitive channel 1 of Mesorhizobium japonicum (strain LMG 29417 / CECT 9101 / MAFF 303099) (Mesorhizobium loti (strain MAFF 303099)).